The chain runs to 613 residues: Epsin-2 (613 aa).

Positions 11–143 (NMMKGYSSTQ…NDEERLREER (133 aa)) constitute an ENTH domain. Disordered stretches follow at residues 140–208 (REER…DDED), 323–351 (TAANMQQQQQQPADFQQPLPTGSNNPFSM), and 356–375 (RQKQEQQHAQLQRQQEEARQ). Positions 148–167 (RNRRANRAARPRPRRQRTRS) are enriched in basic residues. Position 165 is a phosphothreonine (threonine 165). Serine 167 carries the phosphoserine modification. UIM domains are found at residues 175–194 (SYQDDLEKALEESRITAQED) and 206–225 (DEDPDFQAALQLSKEEEELK). A compositionally biased stretch (basic and acidic residues) spans 179–188 (DLEKALEESR). The span at 323–339 (TAANMQQQQQQPADFQQ) shows a compositional bias: low complexity. Polar residues predominate over residues 340–350 (PLPTGSNNPFS). Lysine 426 is covalently cross-linked (Glycyl lysine isopeptide (Lys-Gly) (interchain with G-Cter in ubiquitin)). A Phosphothreonine modification is found at threonine 430. Residue serine 434 is modified to Phosphoserine. Threonine 450, threonine 468, and threonine 470 each carry phosphothreonine. A compositionally biased stretch (polar residues) spans 471–512 (GTFINSQGTGYKQVTNEPKNNPFLSNQYTGLPSTNIVPTQTG). Positions 471–613 (GTFINSQGTG…PDQGVSLIDL (143 aa)) are disordered. The span at 526-600 (SPQQNPTGIS…QQQQQQQQQQ (75 aa)) shows a compositional bias: low complexity.

It belongs to the epsin family. In terms of processing, phosphorylated by PRK1.

It is found in the cytoplasm. It localises to the membrane. Binds to membranes enriched in phosphatidylinositol 3,5-bisphosphate (PtdIns(3,5)P2) and phosphatidylinositol 4,5-bisphosphate (PtdIns(4,5)P2). Required for endocytosis and localization of actin. The protein is Epsin-2 (ENT2) of Saccharomyces cerevisiae (strain ATCC 204508 / S288c) (Baker's yeast).